Reading from the N-terminus, the 392-residue chain is Tryptophan synthase beta chain (392 aa).

An N6-(pyridoxal phosphate)lysine modification is found at Lys84.

This sequence belongs to the TrpB family. Tetramer of two alpha and two beta chains. Requires pyridoxal 5'-phosphate as cofactor.

It carries out the reaction (1S,2R)-1-C-(indol-3-yl)glycerol 3-phosphate + L-serine = D-glyceraldehyde 3-phosphate + L-tryptophan + H2O. The protein operates within amino-acid biosynthesis; L-tryptophan biosynthesis; L-tryptophan from chorismate: step 5/5. Its function is as follows. The beta subunit is responsible for the synthesis of L-tryptophan from indole and L-serine. This is Tryptophan synthase beta chain from Campylobacter jejuni subsp. jejuni serotype O:6 (strain 81116 / NCTC 11828).